A 740-amino-acid polypeptide reads, in one-letter code: MYIVSSKKVSRAPLHVASLCVTLHRLKCDRNQPCSTCSHRGLSFSCTYVASAANSVRKADQSRPSPRPAAGIQDRITQLEGLVLTLMHSVNHKPAPSTGAPESASVLDADLPASFGRISLENDETRYVSGDHWISILDGIAELKDHFEDDNLNAGASPAAGAATAEYQGPKLLFGCHSPTTRESILASLPQRPVTDRLVSKYFNSMDMASSIIHGPTFIREYETFWLAPSETPIMWIGLLFAVIALGTHFQQRETHFIHPSPQRHSVLEAYKDKVIECLVLGKYTKVGPYAIETLMLYFSLEHLPAADTRVDNWILVGIIVRLAMRVGYHRDPSHTPQIKPFQAEMRRRHWATIVQLDLMTSTQVGLPRMVNEAVCDTVEPRNLLDQDFDDQVVDLPPSRPDSDMTSILYLNARNKLMTVFGMITDLTTSTFPTSYRHVMRLDRTLHNTVAAIPSGLQLKALSQSITEPSETILRRIYLDMTFHKARCILHRKYLTAAQVNASYIYSRTSCIDAAVRILQHQDVLFRECQPGGLLHSGNWKITSVLNHDFLLAITILSLDLNGAMELASKSQLIETPMEQQRRENIIRSLNRSYNIWLQSANTSREARKAAEVLRIVLAKAQNSSISTPSHDQDDLDGEAATEATESEYMNSPLTLQPFLACDPGASTAIGTNICTTLDVASPSDYMEDLNDNVTSGVDFDWDNWDSHFRGQNTPNMSTMDLRFPNLDYPTDGRGSDGCI.

A DNA-binding region (zn(2)-C6 fungal-type) is located at residues 25-46 (RLKCDRNQPCSTCSHRGLSFSC). Residues 625–645 (SISTPSHDQDDLDGEAATEAT) form a disordered region.

The protein resides in the nucleus. Functionally, transcription factor; part of the gene cluster that mediates the biosynthesis of macrophasetins, 3-decalinoyltetramic acids (DTAs) which feature a tetramate (pyrrolidine-2,4-dione) unit connected to a decalin fragment and that have potent bioactivities. The protein is Zn(2)-C6 fungal-type transcription factor mpsB of Macrophomina phaseolina (strain MS6) (Charcoal rot fungus).